The primary structure comprises 624 residues: Chromosomal replication initiator protein DnaA (624 aa).

The tract at residues 1–99 is domain I, interacts with DnaA modulators; that stretch reads MADVPADLAA…SAGEPPSPPA (99 aa). Positions 88–284 are disordered; the sequence is DDSAGEPPSP…APGPGEPHAR (197 aa). Positions 100 to 283 are domain II; it reads PPMHQSHQSQ…PAPGPGEPHA (184 aa). The span at 102–112 shows a compositional bias: low complexity; it reads MHQSHQSQQGH. 2 stretches are compositionally biased toward basic and acidic residues: residues 118–141 and 176–206; these read QRDD…DGMP and GYQD…REQA. Positions 250–264 are enriched in gly residues; it reads PRQGGHGPGRTGGSV. The segment at 284–500 is domain III, AAA+ region; the sequence is RLNPKYLFDT…GALIRVTAFA (217 aa). ATP-binding residues include Gly328, Gly330, Lys331, and Thr332. A domain IV, binds dsDNA region spans residues 501–624; sequence SLNRQPVDLG…TELTNRIKNG (124 aa).

It belongs to the DnaA family. In terms of assembly, oligomerizes as a right-handed, spiral filament on DNA at oriC.

It is found in the cytoplasm. Functionally, plays an essential role in the initiation and regulation of chromosomal replication. ATP-DnaA binds to the origin of replication (oriC) to initiate formation of the DNA replication initiation complex once per cell cycle. Binds the DnaA box (a 9 base pair repeat at the origin) and separates the double-stranded (ds)DNA. Forms a right-handed helical filament on oriC DNA; dsDNA binds to the exterior of the filament while single-stranded (ss)DNA is stabiized in the filament's interior. The ATP-DnaA-oriC complex binds and stabilizes one strand of the AT-rich DNA unwinding element (DUE), permitting loading of DNA polymerase. After initiation quickly degrades to an ADP-DnaA complex that is not apt for DNA replication. Binds acidic phospholipids. The DnaA box consensus is 5'-(T/C)(T/C)(G/AC)TCCACA-3'. This Streptomyces anulatus (Streptomyces chrysomallus) protein is Chromosomal replication initiator protein DnaA.